A 376-amino-acid polypeptide reads, in one-letter code: Lipoyl synthase 2, mitochondrial (376 aa).

[4Fe-4S] cluster-binding residues include cysteine 109, cysteine 114, cysteine 120, cysteine 140, cysteine 144, cysteine 147, and serine 356. Residues 125–345 (ETGTATATIM…QTLGMEMGFR (221 aa)) enclose the Radical SAM core domain.

The protein belongs to the radical SAM superfamily. Lipoyl synthase family. It depends on [4Fe-4S] cluster as a cofactor.

The protein localises to the mitochondrion. The catalysed reaction is [[Fe-S] cluster scaffold protein carrying a second [4Fe-4S](2+) cluster] + N(6)-octanoyl-L-lysyl-[protein] + 2 oxidized [2Fe-2S]-[ferredoxin] + 2 S-adenosyl-L-methionine + 4 H(+) = [[Fe-S] cluster scaffold protein] + N(6)-[(R)-dihydrolipoyl]-L-lysyl-[protein] + 4 Fe(3+) + 2 hydrogen sulfide + 2 5'-deoxyadenosine + 2 L-methionine + 2 reduced [2Fe-2S]-[ferredoxin]. It functions in the pathway protein modification; protein lipoylation via endogenous pathway; protein N(6)-(lipoyl)lysine from octanoyl-[acyl-carrier-protein]: step 2/2. In terms of biological role, catalyzes the radical-mediated insertion of two sulfur atoms into the C-6 and C-8 positions of the octanoyl moiety bound to the lipoyl domains of lipoate-dependent enzymes, thereby converting the octanoylated domains into lipoylated derivatives. This is Lipoyl synthase 2, mitochondrial from Pisum sativum (Garden pea).